A 317-amino-acid chain; its full sequence is Ribosomal protein L11 methyltransferase (317 aa).

The S-adenosyl-L-methionine site is built by Thr158, Gly179, Asp201, and Asn244.

It belongs to the methyltransferase superfamily. PrmA family.

It is found in the cytoplasm. It catalyses the reaction L-lysyl-[protein] + 3 S-adenosyl-L-methionine = N(6),N(6),N(6)-trimethyl-L-lysyl-[protein] + 3 S-adenosyl-L-homocysteine + 3 H(+). Its function is as follows. Methylates ribosomal protein L11. The protein is Ribosomal protein L11 methyltransferase of Lactococcus lactis subsp. lactis (strain IL1403) (Streptococcus lactis).